The following is a 199-amino-acid chain: ATP-dependent Clp protease proteolytic subunit 3 (199 aa).

The Nucleophile role is filled by S101. H126 is a catalytic residue.

This sequence belongs to the peptidase S14 family. As to quaternary structure, fourteen ClpP subunits assemble into 2 heptameric rings which stack back to back to give a disk-like structure with a central cavity, resembling the structure of eukaryotic proteasomes.

Its subcellular location is the cytoplasm. The enzyme catalyses Hydrolysis of proteins to small peptides in the presence of ATP and magnesium. alpha-casein is the usual test substrate. In the absence of ATP, only oligopeptides shorter than five residues are hydrolyzed (such as succinyl-Leu-Tyr-|-NHMec, and Leu-Tyr-Leu-|-Tyr-Trp, in which cleavage of the -Tyr-|-Leu- and -Tyr-|-Trp bonds also occurs).. In terms of biological role, cleaves peptides in various proteins in a process that requires ATP hydrolysis. Has a chymotrypsin-like activity. Plays a major role in the degradation of misfolded proteins. This Synechococcus elongatus (strain ATCC 33912 / PCC 7942 / FACHB-805) (Anacystis nidulans R2) protein is ATP-dependent Clp protease proteolytic subunit 3.